The following is a 242-amino-acid chain: tRNA (guanine-N(7)-)-methyltransferase (242 aa).

Positions 66, 91, 118, and 141 each coordinate S-adenosyl-L-methionine. Residue aspartate 141 is part of the active site. Residues lysine 145, aspartate 177, and 214–217 (TKFE) contribute to the substrate site.

It belongs to the class I-like SAM-binding methyltransferase superfamily. TrmB family. In terms of assembly, monomer.

The enzyme catalyses guanosine(46) in tRNA + S-adenosyl-L-methionine = N(7)-methylguanosine(46) in tRNA + S-adenosyl-L-homocysteine. The protein operates within tRNA modification; N(7)-methylguanine-tRNA biosynthesis. In terms of biological role, catalyzes the formation of N(7)-methylguanine at position 46 (m7G46) in tRNA. In Buchnera aphidicola subsp. Baizongia pistaciae (strain Bp), this protein is tRNA (guanine-N(7)-)-methyltransferase.